Here is a 60-residue protein sequence, read N- to C-terminus: Large ribosomal subunit protein bL32 (60 aa).

It belongs to the bacterial ribosomal protein bL32 family.

In Borreliella afzelii (strain PKo) (Borrelia afzelii), this protein is Large ribosomal subunit protein bL32.